Here is a 248-residue protein sequence, read N- to C-terminus: Probable transcriptional regulatory protein FTL_0929 (248 aa).

The protein belongs to the TACO1 family.

It is found in the cytoplasm. This Francisella tularensis subsp. holarctica (strain LVS) protein is Probable transcriptional regulatory protein FTL_0929.